The chain runs to 535 residues: Beta-amylase 1, chloroplastic (535 aa).

The N-terminal 36 residues, 1–36 (MALNLAQSAAAAACFATAGDARRAASVVAMPSSSSS), are a transit peptide targeting the chloroplast. Residues aspartate 115, histidine 155, and aspartate 163 each coordinate substrate. Glutamate 247 acts as the Proton donor in catalysis. Residues lysine 361, histidine 366, and threonine 408 each coordinate substrate. The Proton acceptor role is filled by glutamate 446. Substrate is bound by residues 447-448 (NA) and arginine 480.

Belongs to the glycosyl hydrolase 14 family.

It localises to the plastid. Its subcellular location is the chloroplast. The enzyme catalyses Hydrolysis of (1-&gt;4)-alpha-D-glucosidic linkages in polysaccharides so as to remove successive maltose units from the non-reducing ends of the chains.. In terms of biological role, possesses beta-amylase activity in vitro. May be involved in cold resistance by mediating the accumulation of maltose upon freezing stress, thus contributing to the protection of membranes. The sequence is that of Beta-amylase 1, chloroplastic from Oryza sativa subsp. japonica (Rice).